A 244-amino-acid polypeptide reads, in one-letter code: Phosphoadenosine 5'-phosphosulfate reductase (244 aa).

The active-site Nucleophile; cysteine thiosulfonate intermediate is the cysteine 239.

It belongs to the PAPS reductase family. CysH subfamily.

It is found in the cytoplasm. It carries out the reaction [thioredoxin]-disulfide + sulfite + adenosine 3',5'-bisphosphate + 2 H(+) = [thioredoxin]-dithiol + 3'-phosphoadenylyl sulfate. It functions in the pathway sulfur metabolism; hydrogen sulfide biosynthesis; sulfite from sulfate: step 3/3. Functionally, catalyzes the formation of sulfite from phosphoadenosine 5'-phosphosulfate (PAPS) using thioredoxin as an electron donor. The sequence is that of Phosphoadenosine 5'-phosphosulfate reductase from Yersinia pseudotuberculosis serotype O:1b (strain IP 31758).